Consider the following 1217-residue polypeptide: ATP-dependent helicase/nuclease subunit A (1217 aa).

A UvrD-like helicase ATP-binding domain is found at 10-475 (VIWTDAQWQS…IDLSQNFRSR (466 aa)). 31 to 38 (AAAGSGKT) provides a ligand contact to ATP. In terms of domain architecture, UvrD-like helicase C-terminal spans 476–786 (KEVLSTTNYI…RMMTIHSSKG (311 aa)).

Belongs to the helicase family. AddA subfamily. In terms of assembly, heterodimer of AddA and AddB/RexB. It depends on Mg(2+) as a cofactor.

It carries out the reaction Couples ATP hydrolysis with the unwinding of duplex DNA by translocating in the 3'-5' direction.. It catalyses the reaction ATP + H2O = ADP + phosphate + H(+). Functionally, the heterodimer acts as both an ATP-dependent DNA helicase and an ATP-dependent, dual-direction single-stranded exonuclease. Recognizes the chi site generating a DNA molecule suitable for the initiation of homologous recombination. The AddA nuclease domain is required for chi fragment generation; this subunit has the helicase and 3' -&gt; 5' nuclease activities. This is ATP-dependent helicase/nuclease subunit A from Staphylococcus aureus (strain NCTC 8325 / PS 47).